We begin with the raw amino-acid sequence, 697 residues long: Exocyst complex component 7 (697 aa).

Residues 1-384 are SEC8 and ARHQ binding; that stretch reads MIPPQEASAR…FSTVLTVFPI (384 aa). Coiled coils occupy residues 5 to 42 and 63 to 85; these read QEAS…TRNM and VHKQ…SCLD. The residue at position 133 (S133) is a Phosphoserine. The interval 238-270 is disordered; that stretch reads FRKSSSSSGVPYSPAIPNKRKDTPTKKPIKRPG.

It belongs to the EXO70 family. The exocyst complex is composed of EXOC1, EXOC2, EXOC3, EXOC4, EXOC5, EXOC6, EXOC7 and EXOC8. Interacts with RAB11FIP3. Interacts with ARHQ in a GTP-dependent manner.

It is found in the cytoplasm. Its subcellular location is the cytosol. The protein localises to the cell membrane. It localises to the midbody. The protein resides in the midbody ring. Its function is as follows. Component of the exocyst complex involved in the docking of exocytic vesicles with fusion sites on the plasma membrane. In adipocytes, plays a crucial role in targeting SLC2A4 vesicle to the plasma membrane in response to insulin, perhaps directing the vesicle to the precise site of fusion. It is required for neuron survival and plays an essential role in cortical development. This chain is Exocyst complex component 7 (Exoc7), found in Mus musculus (Mouse).